The sequence spans 421 residues: Tyrosine--tRNA ligase (421 aa).

Position 35 (Tyr35) interacts with L-tyrosine. The short motif at Pro40–His49 is the 'HIGH' region element. Residues Tyr169 and Gln173 each coordinate L-tyrosine. A 'KMSKS' region motif is present at residues Lys229 to Ser233. Lys232 lines the ATP pocket. Residues Arg354 to Ile420 form the S4 RNA-binding domain.

The protein belongs to the class-I aminoacyl-tRNA synthetase family. TyrS type 1 subfamily. As to quaternary structure, homodimer.

The protein resides in the cytoplasm. It carries out the reaction tRNA(Tyr) + L-tyrosine + ATP = L-tyrosyl-tRNA(Tyr) + AMP + diphosphate + H(+). Catalyzes the attachment of tyrosine to tRNA(Tyr) in a two-step reaction: tyrosine is first activated by ATP to form Tyr-AMP and then transferred to the acceptor end of tRNA(Tyr). The polypeptide is Tyrosine--tRNA ligase (Corynebacterium efficiens (strain DSM 44549 / YS-314 / AJ 12310 / JCM 11189 / NBRC 100395)).